The primary structure comprises 475 residues: UDP-glucosyltransferase 102 (475 aa).

Residues serine 278, 344–345, 362–370, and 384–387 each bind UDP-alpha-D-glucose; these read WA, HCGWNSTLE, and YGEQ.

It belongs to the UDP-glycosyltransferase family.

Its pathway is secondary metabolite biosynthesis; terpenoid biosynthesis. Its function is as follows. Probable component of the triterpene saponins (e.g. ginsenosides) biosynthetic pathway. No detectable activity toward protopanaxatriol (PPT). The chain is UDP-glucosyltransferase 102 (UGT102) from Panax ginseng (Korean ginseng).